We begin with the raw amino-acid sequence, 571 residues long: Coiled-coil domain-containing protein 22 homolog (571 aa).

2 coiled-coil regions span residues 406-434 (MMDL…SRTA) and 509-571 (CAEL…AHLR).

It belongs to the CCDC22 family.

In Culex quinquefasciatus (Southern house mosquito), this protein is Coiled-coil domain-containing protein 22 homolog.